A 598-amino-acid chain; its full sequence is MIQHIRNFSIIAHIDHGKSTLADRIIQFCGGLSDREMEDQVLDSMDLERERGITIKAQTAALHYQAKDGKNYLLNLIDTPGHVDFSYEVSRSLSACEGALLVVDASQGVEAQTVANCYTAIEQGVEVIPVLNKIDLPAADPDRVIAEVEDIIGIEAKGALRISAKTGEGVDQVLEMIVAQIPPPEGDVDAPLKALIIDSWFDSYVGVVMLVRVVDGVLRPGNKILLMSSKANYLCEEVGVFQPKAVSHKSLSAGEVGFIISGIKDLKSAKVGDTVTLADRPAGEPLAGFKEIKPQVFAGLYPVESNQYDALRAALEKLQLNDASLHFEPETSQALGFGFRCGFLGLLHLDIVQERLEREYDMDLITTAPTVVYQVVLRDGKITEIENPSRLPDLSSIEEIREPIITATILVPEEYVGTVMTLCTGKRGIQKNMQYMGRQVMLVYEMPLNEVVMDFFDRLKSVSRGYASLDYEFKEFRAADLVKLDILINSDRVDALSLIVHRASSQHRGRELAQKMRELIPRQMFDIAVQAAIGAHIVARENVKALRKNVLAKCYGGDITRKRKLLEKQKAGKKRMKRVGNVEIPQAAFLAILQVDGK.

Positions 3-185 (QHIRNFSIIA…MIVAQIPPPE (183 aa)) constitute a tr-type G domain. GTP-binding positions include 15–20 (DHGKST) and 132–135 (NKID).

It belongs to the TRAFAC class translation factor GTPase superfamily. Classic translation factor GTPase family. LepA subfamily.

It localises to the cell inner membrane. It carries out the reaction GTP + H2O = GDP + phosphate + H(+). Its function is as follows. Required for accurate and efficient protein synthesis under certain stress conditions. May act as a fidelity factor of the translation reaction, by catalyzing a one-codon backward translocation of tRNAs on improperly translocated ribosomes. Back-translocation proceeds from a post-translocation (POST) complex to a pre-translocation (PRE) complex, thus giving elongation factor G a second chance to translocate the tRNAs correctly. Binds to ribosomes in a GTP-dependent manner. The protein is Elongation factor 4 of Nitrosomonas europaea (strain ATCC 19718 / CIP 103999 / KCTC 2705 / NBRC 14298).